Reading from the N-terminus, the 101-residue chain is Large ribosomal subunit protein bL20 (101 aa).

The protein belongs to the bacterial ribosomal protein bL20 family.

Its function is as follows. Binds directly to 23S ribosomal RNA and is necessary for the in vitro assembly process of the 50S ribosomal subunit. It is not involved in the protein synthesizing functions of that subunit. The chain is Large ribosomal subunit protein bL20 (rplT) from Carsonella ruddii (strain PV).